Consider the following 406-residue polypeptide: MKVSFFLLKFPLSSETFVLNQITAFIDMGHEVEIVALQKGDTQHTHAAWEKYGLAAKTRWLQDEPQGRLAKLRYRACKTLPGLHRAATWKALNFTRYGDESRNLILSAICAQVSQPFVADVFIAHFGPAGVTAAKLRELGVLRGKIATIFHGIDISSREVLSHYTPEYQQLFRRGDLMLPISDLWAGRLKSMGCPPEKIAVSRMGVDMTRFTHRSVKAPGMPLEMISVARLTEKKGLHVAIEACRQLKAQGVAFRYRILGIGPWERRLRTLIEQYQLEDVIEMPGFKPSHEVKAMLDDADVFLLPSITGTDGDMEGIPVALMEAMAVGIPVVSTVHSGIPELVEAGKSGWLVPENDAQALAARLAEFSRIDHDTLESVITRAREKVAQDFNQQAINRQLASLLQTI.

Belongs to the glycosyltransferase group 1 family. Glycosyltransferase 4 subfamily.

The protein operates within slime biogenesis; slime polysaccharide biosynthesis. This is Putative colanic acid biosynthesis glycosyltransferase WcaL (wcaL) from Salmonella typhimurium (strain LT2 / SGSC1412 / ATCC 700720).